The chain runs to 142 residues: Hemoglobin subunit alpha (142 aa).

In terms of domain architecture, Globin spans 1 to 142 (VLSAADKNNV…VSTVLTSKYR (142 aa)). The residue at position 3 (Ser-3) is a Phosphoserine. An N6-succinyllysine mark is found at Lys-7 and Lys-11. N6-acetyllysine; alternate is present on Lys-16. Position 16 is an N6-succinyllysine; alternate (Lys-16). At Tyr-24 the chain carries Phosphotyrosine. Position 35 is a phosphoserine (Ser-35). An N6-succinyllysine modification is found at Lys-40. His-58 serves as a coordination point for O2. Position 87 (His-87) interacts with heme b. Residue Ser-102 is modified to Phosphoserine. Thr-108 is modified (phosphothreonine). Position 125 is a phosphoserine (Ser-125). Phosphothreonine is present on residues Thr-135 and Thr-138. Ser-139 carries the phosphoserine modification.

The protein belongs to the globin family. Heterotetramer of two alpha chains and two beta chains. As to expression, red blood cells.

Involved in oxygen transport from the lung to the various peripheral tissues. Its function is as follows. Hemopressin acts as an antagonist peptide of the cannabinoid receptor CNR1. Hemopressin-binding efficiently blocks cannabinoid receptor CNR1 and subsequent signaling. The chain is Hemoglobin subunit alpha (HBA) from Procavia capensis habessinica (Abyssinian hyrax).